The chain runs to 1010 residues: Signal peptide, CUB and EGF-like domain-containing protein 2 (1010 aa).

Positions 1–24 (MGAVWTVRLLCLFLLLLNTRQSAA) are cleaved as a signal peptide. The region spanning 28–68 (NTDQCAEGSDACHIDAICQNTPTSYKCTCKTGFKGDGKHCE) is the EGF-like 1; calcium-binding domain. Intrachain disulfides connect C32-C45, C39-C54, C56-C67, C73-C85, C81-C94, C96-C109, C115-C126, and C122-C135. An EGF-like 2; calcium-binding domain is found at 69-110 (DIDECDVEYNGGCVHECNNIPGNYRCTCLDGFHLAHDGHNCL). The 37-residue stretch at 111–147 (DVDECVFNNGGCQHVCVNTMGSYECRCKQGFFLSDNQ) folds into the EGF-like 3; calcium-binding domain. EGF-like domains follow at residues 160–196 (CMNK…QRGC) and 200–235 (CNHG…GRTC). N-linked (GlcNAc...) asparagine glycosylation is present at N249. The 36-residue stretch at 269–304 (CAVNNGGCDSTCKDTSTGVRCSCPVGFTLQPDGKSC) folds into the EGF-like 6 domain. In terms of domain architecture, EGF-like 7; calcium-binding spans 306–346 (DIDECELHNGGCDHYCRNTIGSFECSCRKGFKLLTDERSCQ). 9 disulfides stabilise this stretch: C310–C321, C317–C330, C332–C345, C351–C361, C357–C370, C372–C384, C390–C401, C397–C410, and C412–C425. The region spanning 347-385 (DIDECFFERTCDHTCVNSPGSFQCVCNKGYTLYGLAHCG) is the EGF-like 8; calcium-binding domain. The 41-residue stretch at 386 to 426 (DINECSFNNGGCEHTCENTMGSFGCHCRAGYKLHWNKKDCI) folds into the EGF-like 9; calcium-binding domain. 4 N-linked (GlcNAc...) asparagine glycosylation sites follow: N488, N703, N774, and N803. A disulfide bridge links C822 with C848. In terms of domain architecture, CUB spans 822 to 934 (CGGELGEFTG…KGFQVPYVTY (113 aa)). Residues 860–869 (ILVVVPEIYL) form an interaction with the cholesterol-anchor of SHH region. Cysteines 875 and 896 form a disulfide. N-linked (GlcNAc...) asparagine glycosylation is present at N982.

In terms of assembly, interacts with SHH via the cholesterol anchor of the dually lipid-modified SHH (ShhNp). Interacts with PTCH1. Forms homooligomers and heterooligomers with SCUBE1 and SCUBE3. Interacts with VEGFR2. In terms of processing, N-glycosylated.

Its subcellular location is the secreted. It is found in the cell surface. In terms of biological role, lipid-binding protein required for SHH long-range signaling by binding to the dually lipid-modified SHH (ShhNp) and by promoting ShhNp mobilization, solubilization and release from the cell membrane. Acts by enhancing the proteolytic processing (shedding) of the lipid-modified N- and C- terminal of ShhNp at the cell surface. Synergizes with DISP1 to cause an increase in SHH secretion. Probable cell surface coreceptor for VEGFR2 involved in VEGFR2-mediated angiogenesis. The chain is Signal peptide, CUB and EGF-like domain-containing protein 2 (scube2) from Danio rerio (Zebrafish).